Reading from the N-terminus, the 318-residue chain is Acetyl-coenzyme A carboxylase carboxyl transferase subunit alpha (318 aa).

Residues 41-295 enclose the CoA carboxyltransferase C-terminal domain; it reads HLEKKNEELT…KQRILTDLNE (255 aa).

The protein belongs to the AccA family. As to quaternary structure, acetyl-CoA carboxylase is a heterohexamer composed of biotin carboxyl carrier protein (AccB), biotin carboxylase (AccC) and two subunits each of ACCase subunit alpha (AccA) and ACCase subunit beta (AccD).

Its subcellular location is the cytoplasm. It catalyses the reaction N(6)-carboxybiotinyl-L-lysyl-[protein] + acetyl-CoA = N(6)-biotinyl-L-lysyl-[protein] + malonyl-CoA. Its pathway is lipid metabolism; malonyl-CoA biosynthesis; malonyl-CoA from acetyl-CoA: step 1/1. Functionally, component of the acetyl coenzyme A carboxylase (ACC) complex. First, biotin carboxylase catalyzes the carboxylation of biotin on its carrier protein (BCCP) and then the CO(2) group is transferred by the carboxyltransferase to acetyl-CoA to form malonyl-CoA. This chain is Acetyl-coenzyme A carboxylase carboxyl transferase subunit alpha, found in Tolumonas auensis (strain DSM 9187 / NBRC 110442 / TA 4).